A 317-amino-acid chain; its full sequence is Small ribosomal subunit protein RACK1 (317 aa).

7 WD repeats span residues 13–44 (GHSGWVTQIATTPQFPDMILSASRDKTIIMWK), 61–91 (GHSHFVSDVVISSDGQFALSGSWDGTLRLWD), 103–133 (GHTKDVLSVAFSADNRQIVSGSRDKTIKLWN), 146–178 (SHTEWVSCVRFSPNSSNPIIVSCGWDKMVKVWN), 190–220 (GHTGYLNTVTVSPDGSLCASGGKDGQAMLWD), 231–260 (DGGDTINALCFSPNRYWLCAATGPSIKIWD), and 281–311 (AEPPQCTSLAWSADGQTLFAGYTDNLIRVWQ).

The protein belongs to the WD repeat G protein beta family. Ribosomal protein RACK1 subfamily.

It is found in the cytoplasm. Functionally, involved in the recruitment, assembly and/or regulation of a variety of signaling molecules. Interacts with a wide variety of proteins and plays a role in many cellular processes. Required for VANGL2 membrane localization, inhibits Wnt signaling and regulates cellular polarization and oriented cell division during gastrulation. The sequence is that of Small ribosomal subunit protein RACK1 (gnb2l1) from Danio rerio (Zebrafish).